The primary structure comprises 196 residues: MFDINKDPFEHFDRLMKEAVAKQIPEANAMSVATVDEKGVPSVRIVYLKEVSQGGFVFYGNYNSHKGKDIETNPIVCLNFHWPAIWQQIRITGKAEKISAAESDAYFATRARLSQIGAWASHQSETIPALDWLSRRVQEYEKQFDGQVVPRPPHWGGWRVIPTEIEFWFGLGGRLHERHIYQRTEDGGWKTFLRSP.

Lys-49 contributes to the substrate binding site. Residues Lys-66 and Gln-88 each contribute to the FMN site. Residues Tyr-106, Arg-110, and Ser-114 each coordinate substrate. FMN is bound by residues 123 to 124 (QS) and Trp-168. Substrate is bound at residue 174-176 (RLH). Arg-178 contributes to the FMN binding site.

It belongs to the pyridoxamine 5'-phosphate oxidase family. Homodimer. It depends on FMN as a cofactor.

The catalysed reaction is pyridoxamine 5'-phosphate + O2 + H2O = pyridoxal 5'-phosphate + H2O2 + NH4(+). The enzyme catalyses pyridoxine 5'-phosphate + O2 = pyridoxal 5'-phosphate + H2O2. It participates in cofactor metabolism; pyridoxal 5'-phosphate salvage; pyridoxal 5'-phosphate from pyridoxamine 5'-phosphate: step 1/1. It functions in the pathway cofactor metabolism; pyridoxal 5'-phosphate salvage; pyridoxal 5'-phosphate from pyridoxine 5'-phosphate: step 1/1. Its function is as follows. Catalyzes the oxidation of either pyridoxine 5'-phosphate (PNP) or pyridoxamine 5'-phosphate (PMP) into pyridoxal 5'-phosphate (PLP). This chain is Pyridoxine/pyridoxamine 5'-phosphate oxidase, found in Bdellovibrio bacteriovorus (strain ATCC 15356 / DSM 50701 / NCIMB 9529 / HD100).